Reading from the N-terminus, the 295-residue chain is Elongation factor Ts (295 aa).

The tract at residues Thr-80 to Val-83 is involved in Mg(2+) ion dislocation from EF-Tu.

This sequence belongs to the EF-Ts family.

The protein localises to the cytoplasm. In terms of biological role, associates with the EF-Tu.GDP complex and induces the exchange of GDP to GTP. It remains bound to the aminoacyl-tRNA.EF-Tu.GTP complex up to the GTP hydrolysis stage on the ribosome. The protein is Elongation factor Ts of Lysinibacillus sphaericus (strain C3-41).